The following is a 354-amino-acid chain: Replication factor C subunit 5 (354 aa).

Position 40–47 (40–47) interacts with ATP; sequence YGPSGSGK.

Belongs to the activator 1 small subunits family. In terms of assembly, heterotetramer of subunits RFC2, RFC3, RFC4 and RFC5 that can form a complex with RFC1. In terms of tissue distribution, expressed in roots, leaves, shoot apical meristem (SAM), flag leaves and panicles.

The protein localises to the nucleus. In terms of biological role, may be involved in DNA replication and thus regulate cell proliferation. The protein is Replication factor C subunit 5 (RFC5) of Oryza sativa subsp. japonica (Rice).